The primary structure comprises 129 residues: Small ribosomal subunit protein uS11 (129 aa).

The protein belongs to the universal ribosomal protein uS11 family. As to quaternary structure, part of the 30S ribosomal subunit. Interacts with proteins S7 and S18. Binds to IF-3.

Located on the platform of the 30S subunit, it bridges several disparate RNA helices of the 16S rRNA. Forms part of the Shine-Dalgarno cleft in the 70S ribosome. The protein is Small ribosomal subunit protein uS11 of Azobacteroides pseudotrichonymphae genomovar. CFP2.